We begin with the raw amino-acid sequence, 561 residues long: MYDRAPRWLDCANRGSTEEHVGPGTYQVPFPKQQATGCYAPFLSLSSKTSACVVSSDAGQAVPGPAHYNVSQAQYNIRGGRSLQNREKRFKKLISDGPGPGSYNWPYLGTLCITTRQKTPRTPAVSRNIDIPSIPSSGKSHGYHLNDDDTIMRRTPPPSDNTIGPAYYNPQFDYPKASLKYKGVNFGNATGRQEFLKYSGPGPGQYDIIQKRKLHCENINIKREQEHNYYTYVPRLYEAIILQEEKKGVPGPGKYNIKSEFDMIKSMSALVNSPSFIFFSETERFEPIKSCTPAPGTYNEIRTAFKCPKKRFGLSLPFNQSAARFTEDSKAQKLPGPGFYDISTNIVKAQVKKPCLKKQPKTGFGSSVPRTLFTAQKKAFRGPGPSDYQVRGTHDELPNLNKSAAFLSRAEKTPPVRKMRLPAPGRYDVQKSYDMSQVKHKYMPPRTSVAKKRHSSFLSAAPRCLGKIADGPGPATYSPVLMKSGAIISFVKGPKRFQEFHGEFSPGPTTYELSPFLRHSLLKRTYNVTLPCSSSPNRENTGCPSQKATQKFQREKLQYFN.

STPGR repeat units follow at residues 21–34, 63–72, and 97–104; these read VGPGTYQVPFPKQQ, PGPAHYNVSQ, and GPGPGSYN. A disordered region spans residues 123–143; sequence PAVSRNIDIPSIPSSGKSHGY. STPGR repeat units lie at residues 164-191, 200-210, 250-285, 292-299, 334-367, 421-438, and 471-481; these read GPAYYNPQFDYPKASLKYKGVNFGNATG, GPGPGQYDIIQ, PGPGKYNIKSEFDMIKSMSALVNSPSFIFFSETERF, TPAPGTYN, LPGPGFYDISTNIVKAQVKKPCLKKQPKTGFGSS, LPAPGRYDVQKSYDMSQV, and GPGPATYSPVL.

The sequence is that of Sperm-tail PG-rich repeat-containing protein 2 (Stpg2) from Mus musculus (Mouse).